Here is a 143-residue protein sequence, read N- to C-terminus: Nitrosuccinic acid decarboxylase npaB (143 aa).

The protein belongs to the carboxymuconolactone decarboxylase family. Requires Mg(2+) as cofactor.

The protein operates within mycotoxin biosynthesis. In terms of biological role, nitrosuccinic acid decarboxylase; part of the gene cluster that mediates the biosynthesis of the deadly neurotoxic nitroalkane 3-nitropropanoic acid (3-NPA) that acts as an antimetabolite of succinate and irreversibly inhibits succinate dehydrogenase and disrupts mitochondrial oxidative phosphorylation. NpaB facilitates decarboxylation of nitrosuccinic acid produced by the nitrosuccinic acid synthase npaA to yield the final product of the cluster, the lethal mycotoxin 3-NPA. The chain is Nitrosuccinic acid decarboxylase npaB from Metarhizium robertsii (strain ARSEF 23 / ATCC MYA-3075) (Metarhizium anisopliae (strain ARSEF 23)).